We begin with the raw amino-acid sequence, 186 residues long: Protein FAM219A (186 aa).

2 disordered regions span residues 1 to 47 (MMEE…NYKP) and 59 to 132 (ELAR…GYSS). Positions 67–81 (KNGTVGSPVNQQPKK) are enriched in polar residues. Over residues 123–132 (SRYSSSGYSS) the composition is skewed to low complexity.

Belongs to the FAM219 family.

The chain is Protein FAM219A (fam219a) from Danio rerio (Zebrafish).